Consider the following 180-residue polypeptide: Ribulose bisphosphate carboxylase small subunit, chloroplastic (180 aa).

A chloroplast-targeting transit peptide spans 1–57 (MASVVASAAVVTPFAASAASTTKSSQIVSVQAGLKAGVFGGKSEWQTKTQTNGSRVS).

It belongs to the RuBisCO small chain family. In terms of assembly, heterohexadecamer of 8 large and 8 small subunits.

It localises to the plastid. The protein resides in the chloroplast. Functionally, ruBisCO catalyzes two reactions: the carboxylation of D-ribulose 1,5-bisphosphate, the primary event in carbon dioxide fixation, as well as the oxidative fragmentation of the pentose substrate. Both reactions occur simultaneously and in competition at the same active site. Although the small subunit is not catalytic it is essential for maximal activity. In Marchantia paleacea (Liverwort), this protein is Ribulose bisphosphate carboxylase small subunit, chloroplastic.